The primary structure comprises 372 residues: Putative glutamate--cysteine ligase 2 (372 aa).

It belongs to the glutamate--cysteine ligase type 2 family. YbdK subfamily. As to quaternary structure, homodimer.

The catalysed reaction is L-cysteine + L-glutamate + ATP = gamma-L-glutamyl-L-cysteine + ADP + phosphate + H(+). Its function is as follows. ATP-dependent carboxylate-amine ligase which exhibits weak glutamate--cysteine ligase activity. The chain is Putative glutamate--cysteine ligase 2 from Citrobacter koseri (strain ATCC BAA-895 / CDC 4225-83 / SGSC4696).